Consider the following 46-residue polypeptide: Bacteriocin acidocin 8912 (46 aa).

The propeptide occupies 1–20 (MISSHQKTLTDKELALISGG).

The protein resides in the secreted. Its function is as follows. Has a bactericidal effect on sensitive cells but not a bacteriolytic effect. This chain is Bacteriocin acidocin 8912 (acdT), found in Lactobacillus acidophilus.